Consider the following 172-residue polypeptide: Peptidyl-prolyl cis-trans isomerase (172 aa).

The region spanning 10-168 (YFDVYANEES…YRIEIRDCGV (159 aa)) is the PPIase cyclophilin-type domain.

It belongs to the cyclophilin-type PPIase family.

It is found in the cytoplasm. It catalyses the reaction [protein]-peptidylproline (omega=180) = [protein]-peptidylproline (omega=0). PPIases accelerate the folding of proteins. They catalyze the cis-trans isomerization of proline imidic peptide bonds in oligopeptides. In Encephalitozoon cuniculi (strain GB-M1) (Microsporidian parasite), this protein is Peptidyl-prolyl cis-trans isomerase (CPR1).